Here is a 243-residue protein sequence, read N- to C-terminus: Zwei Ig domain protein zig-6 (243 aa).

An N-terminal signal peptide occupies residues methionine 1–alanine 20. Ig-like C2-type domains lie at proline 30–isoleucine 118 and glycine 133–threonine 212. A disulfide bond links cysteine 47 and cysteine 102. Residues asparagine 91 and asparagine 142 are each glycosylated (N-linked (GlcNAc...) asparagine). Cysteines 145 and 196 form a disulfide.

In terms of tissue distribution, expressed in head and tail body wall muscles.

It localises to the secreted. Its function is as follows. Probably not involved in maintaining the position of ASI and ASH head neuron cell bodies and ventral nerve cord axons of PVQ, PVP, RMEV, AVK and HSN neurons. This chain is Zwei Ig domain protein zig-6, found in Caenorhabditis elegans.